Here is a 317-residue protein sequence, read N- to C-terminus: DNA-directed RNA polymerase subunit alpha (317 aa).

An alpha N-terminal domain (alpha-NTD) region spans residues 1–229 (MLNEFIYPDK…KHYELLENIF (229 aa)). Positions 245-317 (AEKLSLSIEE…ELGMNIETQR (73 aa)) are alpha C-terminal domain (alpha-CTD).

This sequence belongs to the RNA polymerase alpha chain family. Homodimer. The RNAP catalytic core consists of 2 alpha, 1 beta, 1 beta' and 1 omega subunit. When a sigma factor is associated with the core the holoenzyme is formed, which can initiate transcription.

It catalyses the reaction RNA(n) + a ribonucleoside 5'-triphosphate = RNA(n+1) + diphosphate. DNA-dependent RNA polymerase catalyzes the transcription of DNA into RNA using the four ribonucleoside triphosphates as substrates. The polypeptide is DNA-directed RNA polymerase subunit alpha (Aquifex aeolicus (strain VF5)).